The chain runs to 641 residues: MAVPTGSANLFLRPLILAVLSFLLLSSFVSSVEWLDIDSSDLKALQVIETELGVNSQRSSASDVNPCGRRGVFCERRHSATTGEYVLRVTRLVYRSRSLTGTISPVIGMLSELKELTLSNNQLVNAVPVDILSCKQLEVLDLRKNRFSGQIPGNFSSLSRLRILDLSSNKLSGNLNFLKNLRNLENLSVANNLFSGKIPEQIVSFHNLRFFDFSGNRYLEGPAPVMSSIKLQTSPHQTRHILAETPTSSPTNKPNNSTTSKAPKGAPKPGKLKKKKKKSKKKKVAAWILGFVVGAIGGTISGFVFSVLFKLIIQAIRGSEKPPGPSIFSPLIKKAEDLAFLENEEALASLEIIGRGGCGEVFKAELPGSNGKIIAVKKVIQPPKDADELTDEDSKFLNKKMRQIRSEINTVGHIRHRNLLPLLAHVSRPECHYLVYEYMEKGSLQDILTDVQAGNQELMWPARHKIALGIAAGLEYLHMDHNPRIIHRDLKPANVLLDDDMEARISDFGLAKAMPDAVTHITTSHVAGTVGYIAPEFYQTHKFTDKCDIYSFGVILGILVIGKLPSDEFFQHTDEMSLIKWMRNIITSENPSLAIDPKLMDQGFDEQMLLVLKIACYCTLDDPKQRPNSKDVRTMLSQIKH.

The N-terminal stretch at 1–31 (MAVPTGSANLFLRPLILAVLSFLLLSSFVSS) is a signal peptide. Residues 32–284 (VEWLDIDSSD…KKKKSKKKKV (253 aa)) are Extracellular-facing. LRR repeat units follow at residues 112–133 (ELKE…DILS), 136–159 (QLEV…SSLS), 160–182 (RLRI…KNLR), 183–205 (NLEN…IVSF), and 207–228 (NLRF…VMSS). A glycan (N-linked (GlcNAc...) asparagine) is linked at N154. The N-linked (GlcNAc...) asparagine glycan is linked to N186. The tract at residues 243–278 (AETPTSSPTNKPNNSTTSKAPKGAPKPGKLKKKKKK) is disordered. Polar residues predominate over residues 245-259 (TPTSSPTNKPNNSTT). N-linked (GlcNAc...) asparagine glycosylation occurs at N256. The segment covering 260-269 (SKAPKGAPKP) has biased composition (low complexity). Residues 285–305 (AAWILGFVVGAIGGTISGFVF) traverse the membrane as a helical segment. Over 306–641 (SVLFKLIIQA…VRTMLSQIKH (336 aa)) the chain is Cytoplasmic. In terms of domain architecture, Protein kinase spans 347-641 (LASLEIIGRG…VRTMLSQIKH (295 aa)). ATP is bound by residues 353–361 (IGRGGCGEV) and K377. The active-site Proton acceptor is the D489.

It belongs to the protein kinase superfamily. Ser/Thr protein kinase family. Interacts with CST. Interacts with RLP23. Component of a trimeric complex composed of RLP23, SOBIR1 and BAK1. BAK1 is recruited into a pre-formed RLP23-SOBIR1 complex in a ligand-dependent manner. Post-translationally, autophosphorylated on Ser, Thr and Tyr residues. Mostly present in leaves and flowers, with increasing expression in older flowers.

It is found in the cell membrane. It catalyses the reaction L-seryl-[protein] + ATP = O-phospho-L-seryl-[protein] + ADP + H(+). The enzyme catalyses L-threonyl-[protein] + ATP = O-phospho-L-threonyl-[protein] + ADP + H(+). The catalysed reaction is L-tyrosyl-[protein] + ATP = O-phospho-L-tyrosyl-[protein] + ADP + H(+). Dual specificity kinase acting on both serine/threonine- and tyrosine-containing substrates. Acting as a counterplayer of BIR1, promotes the activation of plant defense and cell death. Component of the RLP23-SOBIR1-BAK1 complex that mediates NLP-triggered immunity. Functions as an inhibitor/regulator of abscission, probably by regulating membrane trafficking during abscission. This is Leucine-rich repeat receptor-like serine/threonine/tyrosine-protein kinase SOBIR1 (SOBIR1) from Arabidopsis thaliana (Mouse-ear cress).